We begin with the raw amino-acid sequence, 152 residues long: Nucleoside diphosphate kinase (152 aa).

Residues K11, F59, R87, T93, R104, and N114 each coordinate ATP. H117 functions as the Pros-phosphohistidine intermediate in the catalytic mechanism.

It belongs to the NDK family. Homotetramer. The cofactor is Mg(2+).

Its subcellular location is the cytoplasm. The catalysed reaction is a 2'-deoxyribonucleoside 5'-diphosphate + ATP = a 2'-deoxyribonucleoside 5'-triphosphate + ADP. The enzyme catalyses a ribonucleoside 5'-diphosphate + ATP = a ribonucleoside 5'-triphosphate + ADP. Its function is as follows. Major role in the synthesis of nucleoside triphosphates other than ATP. The ATP gamma phosphate is transferred to the NDP beta phosphate via a ping-pong mechanism, using a phosphorylated active-site intermediate. This is Nucleoside diphosphate kinase from Prochlorococcus marinus (strain MIT 9303).